Consider the following 534-residue polypeptide: Echilunin cytochrome P450 monooxygenase (534 aa).

A helical transmembrane segment spans residues 18-38; that stretch reads VSPAALSWAVVAIYLGTFFWL. Position 441 (Cys441) interacts with heme.

This sequence belongs to the cytochrome P450 family. The cofactor is heme.

Its subcellular location is the membrane. It carries out the reaction preechinulin + reduced [NADPH--hemoprotein reductase] + O2 = neoechinulin A + oxidized [NADPH--hemoprotein reductase] + 2 H2O + H(+). Its pathway is secondary metabolite biosynthesis. The protein operates within alkaloid biosynthesis. Functionally, cytochrome P450 monooxygenase; part of the gene cluster that mediates the biosynthesis of echinulin family alkaloid. The pathway begins with the biosynthesis of the cyclic dipeptide cyclo-L-Trp-L-Ala (cyclo-TA) by the NRPS echPS via condensation of L-alanine and L-tryptophan. The prenyltransferase echPT1 then catalyzes the first prenylation step, a reverse prenylation reaction at C2, to yield preechinulin. Preechinulin is the substrate of the cytochrome P450 monooxygenase echP450 that catalyzes the formation of the double bond between C10 and C11 to produce neoechulin A. The unique prenyltransferase echPT2 functions as a competitive enzyme with echP450 for preechinulin metabolization and uses preechinulin for effective regiospecific prenylations. Preechinulin is prenylated by echPT2 at C5 or C7. C7-prenylation leads to accumulation of tardioxopiperazine B without further modification by echPT2. In contrast, the C5-prenylated tardioxopiperazine A can be prenylated again by echPT2, predominantly at C7 to form echinulin or less frequently at C4 to give variecolorin L. EchPT2 also accepts neoechilunin A to produce varlecolorin G (prenylation at C5) or isoechinulin A (prenylation at C7). EchPT2 further converts isoechinulin A into dehydroechinulin. Moreover, a yet unidentified enzyme can also convert neoechilunin A into neoechilunin B by introducing a double bond between positions C14 and C17 and thus provides a further substrate to echPT2 for C5 and C7 prenylation. The protein is Echilunin cytochrome P450 monooxygenase of Aspergillus ruber (strain CBS 135680).